The chain runs to 450 residues: Aspartyl/glutamyl-tRNA(Asn/Gln) amidotransferase subunit B (450 aa).

Belongs to the GatB/GatE family. GatB subfamily. As to quaternary structure, heterotrimer of A, B and C subunits.

It carries out the reaction L-glutamyl-tRNA(Gln) + L-glutamine + ATP + H2O = L-glutaminyl-tRNA(Gln) + L-glutamate + ADP + phosphate + H(+). The enzyme catalyses L-aspartyl-tRNA(Asn) + L-glutamine + ATP + H2O = L-asparaginyl-tRNA(Asn) + L-glutamate + ADP + phosphate + 2 H(+). Functionally, allows the formation of correctly charged Asn-tRNA(Asn) or Gln-tRNA(Gln) through the transamidation of misacylated Asp-tRNA(Asn) or Glu-tRNA(Gln) in organisms which lack either or both of asparaginyl-tRNA or glutaminyl-tRNA synthetases. The reaction takes place in the presence of glutamine and ATP through an activated phospho-Asp-tRNA(Asn) or phospho-Glu-tRNA(Gln). This Methanobrevibacter smithii (strain ATCC 35061 / DSM 861 / OCM 144 / PS) protein is Aspartyl/glutamyl-tRNA(Asn/Gln) amidotransferase subunit B.